The chain runs to 298 residues: Zinc finger protein-like 1 homolog (298 aa).

The B box-type; degenerate zinc-finger motif lies at 1-43 (MGLCKCPKRLVTNQFCFEHRVNVCEHCMVQSHPKCIVQSYLQW). The segment at 53-101 (CTLCGTTLEQGDCVRLVCYHVFHWDCLNARQAALPANTAPRGHQCPACT) adopts an RING-type; atypical zinc-finger fold. The disordered stretch occupies residues 199–230 (AGDYASSRRPLLPRQSPIGGTDRDDNKYQRRT). Ser214 is subject to Phosphoserine. Residues 255-275 (WFLVTAGILAFVLFVYLMAWL) traverse the membrane as a helical segment.

Belongs to the ZFPL1 family.

The protein localises to the membrane. In Drosophila erecta (Fruit fly), this protein is Zinc finger protein-like 1 homolog.